The following is a 209-amino-acid chain: Uracil phosphoribosyltransferase (209 aa).

5-phospho-alpha-D-ribose 1-diphosphate-binding positions include arginine 79, arginine 104, and 131–139 (DPMLATGGS). Uracil-binding positions include isoleucine 194 and 199 to 201 (GDA). Aspartate 200 provides a ligand contact to 5-phospho-alpha-D-ribose 1-diphosphate.

The protein belongs to the UPRTase family. The cofactor is Mg(2+).

It carries out the reaction UMP + diphosphate = 5-phospho-alpha-D-ribose 1-diphosphate + uracil. It participates in pyrimidine metabolism; UMP biosynthesis via salvage pathway; UMP from uracil: step 1/1. Its activity is regulated as follows. Allosterically activated by GTP. Its function is as follows. Catalyzes the conversion of uracil and 5-phospho-alpha-D-ribose 1-diphosphate (PRPP) to UMP and diphosphate. The chain is Uracil phosphoribosyltransferase from Lachnoclostridium phytofermentans (strain ATCC 700394 / DSM 18823 / ISDg) (Clostridium phytofermentans).